The sequence spans 485 residues: Homospermidine synthase (485 aa).

This sequence belongs to the saccharopine dehydrogenase family. NAD(+) is required as a cofactor.

The enzyme catalyses 2 putrescine = sym-homospermidine + NH4(+). It carries out the reaction putrescine + spermidine = sym-homospermidine + propane-1,3-diamine. Functionally, involved in the NAD(+)-dependent synthesis of the polyamine homospermidine from putrescine. The chain is Homospermidine synthase (hss) from Mesorhizobium japonicum (strain LMG 29417 / CECT 9101 / MAFF 303099) (Mesorhizobium loti (strain MAFF 303099)).